A 190-amino-acid chain; its full sequence is Embryo-specific protein ATS3B (190 aa).

The signal sequence occupies residues 1–24 (MASVRLFFTLISFVFIISTSVYES). N37 carries an N-linked (GlcNAc...) asparagine glycan. Residues 48–158 (CAYTVIISTS…ESVWYGFNYC (111 aa)) enclose the PLAT domain.

As to quaternary structure, interacts with EULS3 (via N-terminus). In terms of tissue distribution, expressed in roots, rosette leaves, stems, cauline leaves and flowers.

It localises to the secreted. Functionally, may play a role during embryo development. The sequence is that of Embryo-specific protein ATS3B from Arabidopsis thaliana (Mouse-ear cress).